The following is a 495-amino-acid chain: Oxidoreductase AflY (495 aa).

The disordered stretch occupies residues 1–22; the sequence is MGSHAPAVAGKPDPKKGPYQAT.

It belongs to the questin oxidase family.

It functions in the pathway mycotoxin biosynthesis; aflatoxin biosynthesis. Its function is as follows. Oxidoreductase; part of the gene cluster that mediates the biosynthesis of aflatoxins, a group of polyketide-derived furanocoumarins, and part of the most toxic and carcinogenic compounds among the known mycotoxins. The four major aflatoxins produced by A.parasiticus are aflatoxin B1 (AFB1), aflatoxin B2 (AFB2), aflatoxin G1 (AFG1) and aflatoxin G2 (AFG2). Within the aflatoxin pathway, the oxidoreductase aflY seems to be involved in the conversion of versicolorin A (VERA) to demethylsterigmatocystin (DMST), through probable Baeyer-Villiger oxidation required for the formation of the xanthone ring. The biosynthesis of aflatoxins begins with the norsolorinic acid synthase aflC that combines a hexanoyl starter unit produced by the fatty acid synthase aflA/aflB and 7 malonyl-CoA extender units to synthesize the precursor NOR. The second step is the conversion of NOR to averantin and requires the norsolorinic acid ketoreductase aflD, which catalyzes the dehydration of norsolorinic acid to form (1'S)-averantin. The norsolorinic acid reductases aflE and aflF may also play a role in the conversion of NOR to AVN. The cytochrome P450 monooxygenase aflG then catalyzes the hydroxylation of AVN to 5'hydroxyaverantin (HAVN). The next step is performed by the 5'-hydroxyaverantin dehydrogenase aflH that transforms HAVN to 5'-oxoaverantin (OAVN) which is further converted to averufin (AVF) by aflK that plays a dual role in the pathway, as a 5'-oxoaverantin cyclase that mediates conversion of 5'-oxoaverantin, as well as a versicolorin B synthase in a later step in the pathway. The averufin oxidase aflI catalyzes the conversion of AVF to versiconal hemiacetal acetate (VHA). VHA is then the substrate for the versiconal hemiacetal acetate esterase aflJ to yield versiconal (VAL). Versicolorin B synthase aflK then converts VAL to versicolorin B (VERB) by closing the bisfuran ring of aflatoxin which is required for DNA-binding, thus giving to aflatoxin its activity as a mutagen. Then, the activity of the versicolorin B desaturase aflL leads to versicolorin A (VERA). A branch point starts from VERB since it can also be converted to dihydrodemethylsterigmatocystin (DMDHST), probably also by aflL, VERA being a precursor for aflatoxins B1 and G1, and DMDHST for aflatoxins B2 and G2. Next, the versicolorin reductase aflM and the cytochrome P450 monooxygenase aflN are involved in conversion of VERA to demethylsterigmatocystin (DMST). AflX and aflY seem also involved in this step, through probable aflX-mediated epoxide ring-opening step following versicolorin A oxidation and aflY-mediated Baeyer-Villiger oxidation required for the formation of the xanthone ring. The methyltransferase aflO then leads to the modification of DMST to sterigmatocystin (ST), and of DMDHST to dihydrosterigmatocystin (DHST). Both ST and DHST are then substrates of the O-methyltransferase aflP to yield O-methylsterigmatocystin (OMST) and dihydro-O-methylsterigmatocystin (DHOMST), respectively. Finally OMST is converted to aflatoxins B1 and G1, and DHOMST to aflatoxins B2 and G2, via the action of several enzymes including O-methylsterigmatocystin oxidoreductase aflQ, the cytochrome P450 monooxygenase aflU, but also the NADH-dependent flavin oxidoreductase nadA which is specifically required for the synthesis of AFG1. The protein is Oxidoreductase AflY of Aspergillus parasiticus (strain ATCC 56775 / NRRL 5862 / SRRC 143 / SU-1).